The chain runs to 106 residues: MSKLGPLARSVKWTLSVGVIGSVFYLYRYSNNGYFYDHDATWLKQDHQVQDLVDRKEVVPGETRNRKLVVTDDGTAWSRTMGESIKDIWNEQIRNSVDWIYSWGKN.

A helical transmembrane segment spans residues 11-27 (VKWTLSVGVIGSVFYLY).

This sequence belongs to the MICOS complex subunit Mic12 family. In terms of assembly, component of the mitochondrial contact site and cristae organizing system (MICOS) complex.

It is found in the mitochondrion inner membrane. In terms of biological role, component of the MICOS complex, a large protein complex of the mitochondrial inner membrane that plays crucial roles in the maintenance of crista junctions, inner membrane architecture, and formation of contact sites to the outer membrane. The chain is MICOS complex subunit MIC12 (AIM5) from Saccharomyces cerevisiae (strain RM11-1a) (Baker's yeast).